The following is a 69-amino-acid chain: UPF0337 protein ECA0631 (69 aa).

The protein belongs to the UPF0337 (CsbD) family.

The sequence is that of UPF0337 protein ECA0631 from Pectobacterium atrosepticum (strain SCRI 1043 / ATCC BAA-672) (Erwinia carotovora subsp. atroseptica).